Consider the following 338-residue polypeptide: MMAMNAKQPFGMHPVLQEPKFSSLHSGSEAMRRVCLPAPQLQGNIFGSFDESLLARAEALAAVDIVSHGKNHPFKPDATYHTMSSVPCTSTSPTVPISHPAALTSHPHHAVHQGLEGDLLEHISPTLSVSGLGAPEHSVMPAQIHPHHLGAMGHLHQAMGMSHPHAVAPHSAMPACLSDVESDPRELEAFAERFKQRRIKLGVTQADVGAALANLKIPGVGSLSQSTICRFESLTLSHNNMIALKPVLQAWLEEAEAAYREKNSKPELFNGSERKRKRTSIAAPEKRSLEAYFAIQPRPSSEKIAAIAEKLDLKKNVVRVWFCNQRQKQKRMKYSAVH.

The POU-IV box motif lies at 56 to 65; that stretch reads RAEALAAVDI. The POU-specific domain maps to 179–256; that stretch reads DVESDPRELE…VLQAWLEEAE (78 aa). The homeobox DNA-binding region spans 274–333; it reads RKRKRTSIAAPEKRSLEAYFAIQPRPSSEKIAAIAEKLDLKKNVVRVWFCNQRQKQKRMK.

This sequence belongs to the POU transcription factor family. Class-4 subfamily. As to quaternary structure, interacts with ISL1. In terms of tissue distribution, brain.

The protein resides in the nucleus. It is found in the cytoplasm. Its function is as follows. Acts as a transcriptional activator. Acts by binding to sequences related to the consensus octamer motif 5'-ATGCAAAT-3' in the regulatory regions of its target genes. Involved in the auditory system development, required for terminal differentiation of hair cells in the inner ear. This is POU domain, class 4, transcription factor 3 from Mus musculus (Mouse).